The following is a 311-amino-acid chain: tRNA-cytidine(32) 2-sulfurtransferase (311 aa).

Positions Ser-47–Ser-52 match the PP-loop motif motif. [4Fe-4S] cluster-binding residues include Cys-122, Cys-125, and Cys-213.

The protein belongs to the TtcA family. As to quaternary structure, homodimer. It depends on Mg(2+) as a cofactor. [4Fe-4S] cluster serves as cofactor.

Its subcellular location is the cytoplasm. It catalyses the reaction cytidine(32) in tRNA + S-sulfanyl-L-cysteinyl-[cysteine desulfurase] + AH2 + ATP = 2-thiocytidine(32) in tRNA + L-cysteinyl-[cysteine desulfurase] + A + AMP + diphosphate + H(+). It participates in tRNA modification. In terms of biological role, catalyzes the ATP-dependent 2-thiolation of cytidine in position 32 of tRNA, to form 2-thiocytidine (s(2)C32). The sulfur atoms are provided by the cysteine/cysteine desulfurase (IscS) system. This Shigella dysenteriae serotype 1 (strain Sd197) protein is tRNA-cytidine(32) 2-sulfurtransferase.